Here is a 274-residue protein sequence, read N- to C-terminus: Acetyl-coenzyme A carboxylase carboxyl transferase subunit alpha (274 aa).

The CoA carboxyltransferase C-terminal domain maps to 2 to 250; that stretch reads NKEFIKSIVV…KKEIMNAMNE (249 aa).

The protein belongs to the AccA family. As to quaternary structure, acetyl-CoA carboxylase is a heterohexamer composed of biotin carboxyl carrier protein (AccB), biotin carboxylase (AccC) and two subunits each of ACCase subunit alpha (AccA) and ACCase subunit beta (AccD).

The protein resides in the cytoplasm. It catalyses the reaction N(6)-carboxybiotinyl-L-lysyl-[protein] + acetyl-CoA = N(6)-biotinyl-L-lysyl-[protein] + malonyl-CoA. It participates in lipid metabolism; malonyl-CoA biosynthesis; malonyl-CoA from acetyl-CoA: step 1/1. In terms of biological role, component of the acetyl coenzyme A carboxylase (ACC) complex. First, biotin carboxylase catalyzes the carboxylation of biotin on its carrier protein (BCCP) and then the CO(2) group is transferred by the carboxyltransferase to acetyl-CoA to form malonyl-CoA. The sequence is that of Acetyl-coenzyme A carboxylase carboxyl transferase subunit alpha from Clostridium botulinum (strain Alaska E43 / Type E3).